A 136-amino-acid chain; its full sequence is Fluoride-specific ion channel FluC (136 aa).

4 helical membrane passes run 3–23 (TLPPLYATLNVALGGAIGAVL), 46–66 (ATLAINALGSLLMGVLAGVLF), 78–98 (LLIGTGILGGFTTFSAFSLEV), and 109–129 (FAALYVVLSVSLAISALVFGL). Residues glycine 86 and threonine 89 each coordinate Na(+).

This sequence belongs to the fluoride channel Fluc/FEX (TC 1.A.43) family.

Its subcellular location is the cell inner membrane. It carries out the reaction fluoride(in) = fluoride(out). Its activity is regulated as follows. Na(+) is not transported, but it plays an essential structural role and its presence is essential for fluoride channel function. Its function is as follows. Fluoride-specific ion channel. Important for reducing fluoride concentration in the cell, thus reducing its toxicity. This Erythrobacter litoralis (strain HTCC2594) protein is Fluoride-specific ion channel FluC.